The chain runs to 69 residues: Sperm protamine P1 (69 aa).

A disordered region spans residues 1–69; the sequence is MARYRHSRSR…YSRRRRRRYY (69 aa).

It belongs to the protamine P1 family. As to expression, testis.

Its subcellular location is the nucleus. It is found in the chromosome. Protamines substitute for histones in the chromatin of sperm during the haploid phase of spermatogenesis. They compact sperm DNA into a highly condensed, stable and inactive complex. This chain is Sperm protamine P1 (PRM1), found in Pseudochirops cupreus (Coppery ringtail).